The chain runs to 747 residues: MIDSQKEHQKLKITLVSPEQIRVWSETILPNGKRIGEVTNPKTIDLATNKPERNGSFCERIFGPVKSKKCACENKFGEDKKGFAFVDRKKTNDSGLCEHCGVEFMDSRIRRYRMGYIKLASPVTHIWYIKRVPSYIATLIGKQNSEIKDLVYCNLFLARPAVNKPTILRFRGLLQHGEITSWMEILVPYISGWNFVEFQERELATGGTSIQKQLIGLNLRALLNHSYMEWRKLLKNHRIQKRKNKIEKRKNFLVKRIKFAKNLIQAKINPEWMVLCLLPVLPPELRPIFVLGEQVVVESDFNKLYQKVNLRNKNLQNSFEIQGGPFYSTGDFLTLQKRLLQEAVDALLDSGKSGQPRKDHFRNRPYKSFSDVIAGKEGRFRANLLGKRVDYSARSVIVVGPSLALHQCGLPRELAIKLFQPFLIRNLIGQGVVANIRAAKLLIQRRIPVVWKILQQILLGHPVLLNRAPTLHKFGILAFQPILVKERAIRLHPAVCTGFNADFDGDQMAVHLPLSIEAILESRLLMFSHTNLLSPSNGSPITKPTQDMLLGLYILTTEKPRNISQFRCRPSNPTKKFLPEANLCFCNYDDVFIAYQKNRVSLKNPLWFRWKVVNGTILTSVDQEVPIEFQYQSLGTSQQIYEHYTIQRARSGKVLTIYIRTTVGRIIFNREIENAFLAFSKLSESPRAMPVFLNKSDTMFLMILNSCSAKQNCGKPAKRGLKYFVNSAEKILEVSLYETKKTSPFLQ.

4 residues coordinate Zn(2+): cysteine 70, cysteine 72, cysteine 97, and cysteine 100. Residues aspartate 502, aspartate 504, and aspartate 506 each contribute to the Mg(2+) site.

The protein belongs to the RNA polymerase beta' chain family. RpoC1 subfamily. In plastids the minimal PEP RNA polymerase catalytic core is composed of four subunits: alpha, beta, beta', and beta''. When a (nuclear-encoded) sigma factor is associated with the core the holoenzyme is formed, which can initiate transcription. Mg(2+) is required as a cofactor. It depends on Zn(2+) as a cofactor.

It localises to the plastid. It is found in the chloroplast. The enzyme catalyses RNA(n) + a ribonucleoside 5'-triphosphate = RNA(n+1) + diphosphate. Its function is as follows. DNA-dependent RNA polymerase catalyzes the transcription of DNA into RNA using the four ribonucleoside triphosphates as substrates. In Gnetum parvifolium (Small-leaved jointfir), this protein is DNA-directed RNA polymerase subunit beta'.